Here is a 524-residue protein sequence, read N- to C-terminus: Glutamyl-tRNA(Gln) amidotransferase subunit A (524 aa).

Catalysis depends on charge relay system residues Lys109 and Ser184. Residue Ser208 is the Acyl-ester intermediate of the active site.

This sequence belongs to the amidase family. GatA subfamily. In terms of assembly, heterotrimer of A, B and C subunits.

It carries out the reaction L-glutamyl-tRNA(Gln) + L-glutamine + ATP + H2O = L-glutaminyl-tRNA(Gln) + L-glutamate + ADP + phosphate + H(+). Functionally, allows the formation of correctly charged Gln-tRNA(Gln) through the transamidation of misacylated Glu-tRNA(Gln) in organisms which lack glutaminyl-tRNA synthetase. The reaction takes place in the presence of glutamine and ATP through an activated gamma-phospho-Glu-tRNA(Gln). In Tropheryma whipplei (strain Twist) (Whipple's bacillus), this protein is Glutamyl-tRNA(Gln) amidotransferase subunit A.